The following is a 90-amino-acid chain: Small ribosomal subunit protein uS19 (90 aa).

This sequence belongs to the universal ribosomal protein uS19 family.

In terms of biological role, protein S19 forms a complex with S13 that binds strongly to the 16S ribosomal RNA. The chain is Small ribosomal subunit protein uS19 from Thioalkalivibrio sulfidiphilus (strain HL-EbGR7).